The primary structure comprises 217 residues: Lipoprotein CseA (217 aa).

An N-terminal signal peptide occupies residues 1 to 34 (MRGLGTESLRARGALKAAIAAVAGLAVLGLSVSA). C35 carries the N-palmitoyl cysteine lipid modification. Residue C35 is the site of S-diacylglycerol cysteine attachment. Disordered regions lie at residues 39–66 (GTGARDEGPAGSDSVAAGAATPTVSPSK) and 192–217 (FSEESRTHTEYSNAVGGTDSATPAPN).

The protein resides in the cell membrane. Its function is as follows. May be involved in the stabilization of the cell envelope or may interact with the sensor protein CseC to modulate its activity, in response to cell envelope stress. The protein is Lipoprotein CseA (cseA) of Streptomyces avermitilis (strain ATCC 31267 / DSM 46492 / JCM 5070 / NBRC 14893 / NCIMB 12804 / NRRL 8165 / MA-4680).